Consider the following 152-residue polypeptide: S-Adenosylmethionine lyase (152 aa).

In terms of assembly, homotetramer. Interacts with host METK; this interaction induces the polymerization of METK into filaments that are enzymatically inactive.

The catalysed reaction is S-adenosyl-L-methionine = L-homoserine lactone + S-methyl-5'-thioadenosine. Degrades the intracellular SAM pools of the host cell and inhibits the host S-adenosylmethionine synthase METK/MAT, thereby preventing methylation of the viral genome. Induces the polymerization of METK into filaments that are enzymatically inactive. Keeping the viral genome in an unmethylated state allows the phage to shift from a lytic infection under normal growth conditions to a transient lysogenic infection under glucose starvation, by blocking its own expression. Does not protect the virus immune against host restriction-modification systems. The chain is S-Adenosylmethionine lyase from Escherichia coli (Bacteriophage T3).